The chain runs to 144 residues: D-aminoacyl-tRNA deacylase (144 aa).

The short motif at 136 to 137 (GP) is the Gly-cisPro motif, important for rejection of L-amino acids element.

This sequence belongs to the DTD family. Homodimer.

The protein localises to the cytoplasm. The enzyme catalyses glycyl-tRNA(Ala) + H2O = tRNA(Ala) + glycine + H(+). It catalyses the reaction a D-aminoacyl-tRNA + H2O = a tRNA + a D-alpha-amino acid + H(+). In terms of biological role, an aminoacyl-tRNA editing enzyme that deacylates mischarged D-aminoacyl-tRNAs. Also deacylates mischarged glycyl-tRNA(Ala), protecting cells against glycine mischarging by AlaRS. Acts via tRNA-based rather than protein-based catalysis; rejects L-amino acids rather than detecting D-amino acids in the active site. By recycling D-aminoacyl-tRNA to D-amino acids and free tRNA molecules, this enzyme counteracts the toxicity associated with the formation of D-aminoacyl-tRNA entities in vivo and helps enforce protein L-homochirality. In Vibrio parahaemolyticus serotype O3:K6 (strain RIMD 2210633), this protein is D-aminoacyl-tRNA deacylase.